A 346-amino-acid polypeptide reads, in one-letter code: Protease inhibitor Egf1.5b (346 aa).

A signal peptide spans 1-28 (MYIDTGIMSNNIFLFAFFALVGLTRIEA). The region spanning 52–104 (CRENEHYNSTRIECEDECNDRNNKLCYRFQQFCWCNEGYIRNSSHICVKLEDC) is the TIL domain.

It belongs to the polydnaviridae EGF-like motif protein family. In terms of assembly, interacts with host PAP1, PAP3 and SPH2.

Its function is as follows. Counteracts the host humoral immune response by inhibiting the processing and the amidolytic activity of host PAP1 and PAP3. Thereby, melanization of host hemolymph, normally producing several reactive intermediates toxic for viruses, is deregulated and proper immune response cannot occur. The sequence is that of Protease inhibitor Egf1.5b (O5) from Microplitis demolitor (Parasitoid wasp).